Consider the following 428-residue polypeptide: 3-phosphoshikimate 1-carboxyvinyltransferase (428 aa).

3 residues coordinate 3-phosphoshikimate: Lys-23, Ser-24, and Arg-28. Lys-23 is a binding site for phosphoenolpyruvate. Residues Gly-97 and Arg-125 each coordinate phosphoenolpyruvate. 3-phosphoshikimate-binding residues include Ser-170, Ser-171, Gln-172, Ser-198, Asp-314, Asn-337, and Lys-341. Gln-172 lines the phosphoenolpyruvate pocket. Asp-314 serves as the catalytic Proton acceptor. Phosphoenolpyruvate is bound by residues Arg-345, Arg-387, and Lys-412.

The protein belongs to the EPSP synthase family. Monomer.

The protein localises to the cytoplasm. It catalyses the reaction 3-phosphoshikimate + phosphoenolpyruvate = 5-O-(1-carboxyvinyl)-3-phosphoshikimate + phosphate. It participates in metabolic intermediate biosynthesis; chorismate biosynthesis; chorismate from D-erythrose 4-phosphate and phosphoenolpyruvate: step 6/7. In terms of biological role, catalyzes the transfer of the enolpyruvyl moiety of phosphoenolpyruvate (PEP) to the 5-hydroxyl of shikimate-3-phosphate (S3P) to produce enolpyruvyl shikimate-3-phosphate and inorganic phosphate. The chain is 3-phosphoshikimate 1-carboxyvinyltransferase from Yersinia pseudotuberculosis serotype IB (strain PB1/+).